The chain runs to 270 residues: 5'-AMP-activated protein kinase subunit beta-1 (270 aa).

The interval 1-44 (MGNTSSERAALDRQGGHKTPRRDSSGGSKDGDRPKILMDSPEDA) is disordered. Gly2 carries N-myristoyl glycine lipidation. Thr4 is modified (phosphothreonine). 2 positions are modified to phosphoserine: Ser5 and Ser6. The span at 9–36 (AALDRQGGHKTPRRDSSGGSKDGDRPKI) shows a compositional bias: basic and acidic residues. Thr19 is modified (phosphothreonine). Ser24 and Ser25 each carry phosphoserine; by autocatalysis. Residues Ser40, Ser96, and Ser101 each carry the phosphoserine modification. Residues 68–163 (EVNDKAPAQA…QVKKTDFEVF (96 aa)) are glycogen-binding domain. Position 108 is a phosphoserine; by autocatalysis (Ser108). Phosphothreonine is present on Thr148. A Phosphoserine modification is found at Ser182. At Lys201 the chain carries N6-succinyllysine.

Belongs to the 5'-AMP-activated protein kinase beta subunit family. AMPK is a heterotrimer of an alpha catalytic subunit (PRKAA1 or PRKAA2), a beta (PRKAB1 or PRKAB2) and a gamma non-catalytic subunits (PRKAG1, PRKAG2 or PRKAG3). Interacts with FNIP1 and FNIP2. Phosphorylated when associated with the catalytic subunit (PRKAA1 or PRKAA2). Phosphorylated by ULK1; leading to negatively regulate AMPK activity and suggesting the existence of a regulatory feedback loop between ULK1 and AMPK.

Functionally, non-catalytic subunit of AMP-activated protein kinase (AMPK), an energy sensor protein kinase that plays a key role in regulating cellular energy metabolism. In response to reduction of intracellular ATP levels, AMPK activates energy-producing pathways and inhibits energy-consuming processes: inhibits protein, carbohydrate and lipid biosynthesis, as well as cell growth and proliferation. AMPK acts via direct phosphorylation of metabolic enzymes, and by longer-term effects via phosphorylation of transcription regulators. Also acts as a regulator of cellular polarity by remodeling the actin cytoskeleton; probably by indirectly activating myosin. Beta non-catalytic subunit acts as a scaffold on which the AMPK complex assembles, via its C-terminus that bridges alpha (PRKAA1 or PRKAA2) and gamma subunits (PRKAG1, PRKAG2 or PRKAG3). The protein is 5'-AMP-activated protein kinase subunit beta-1 (PRKAB1) of Bos taurus (Bovine).